The chain runs to 282 residues: Bifunctional protein FolD (282 aa).

NADP(+) is bound by residues 166–168 (GAS) and Ile232.

Belongs to the tetrahydrofolate dehydrogenase/cyclohydrolase family. As to quaternary structure, homodimer.

The enzyme catalyses (6R)-5,10-methylene-5,6,7,8-tetrahydrofolate + NADP(+) = (6R)-5,10-methenyltetrahydrofolate + NADPH. It carries out the reaction (6R)-5,10-methenyltetrahydrofolate + H2O = (6R)-10-formyltetrahydrofolate + H(+). Its pathway is one-carbon metabolism; tetrahydrofolate interconversion. Its function is as follows. Catalyzes the oxidation of 5,10-methylenetetrahydrofolate to 5,10-methenyltetrahydrofolate and then the hydrolysis of 5,10-methenyltetrahydrofolate to 10-formyltetrahydrofolate. The chain is Bifunctional protein FolD from Haemophilus influenzae (strain PittGG).